A 248-amino-acid chain; its full sequence is Undecaprenyl-diphosphatase (248 aa).

8 helical membrane passes run 4-24, 40-60, 74-94, 101-121, 134-154, 174-194, 201-221, and 228-248; these read IVLGLIQGLTEFLPISSSGHL, FAFLHLATLAAIIVFVWKEIV, YSLVLKIIISTIPAAIFGFLF, SFSNLKIISFFFLVTAASLFV, ISYIDALIIGLFQMIAIFPGI, ALKYSFLMGIPVILGAGILET, SYILISGLVAFLSGLLSLLIL, and KKLKIFSYYCILIAIIAFFVG.

The protein belongs to the UppP family.

The protein localises to the cell inner membrane. It catalyses the reaction di-trans,octa-cis-undecaprenyl diphosphate + H2O = di-trans,octa-cis-undecaprenyl phosphate + phosphate + H(+). Functionally, catalyzes the dephosphorylation of undecaprenyl diphosphate (UPP). Confers resistance to bacitracin. This is Undecaprenyl-diphosphatase from Thermosipho africanus (strain TCF52B).